The primary structure comprises 247 residues: Probable dihydroorotate dehydrogenase B (NAD(+)), electron transfer subunit (247 aa).

Residues 1–87 (MLRRVTLKET…RGPYGNGFKE (87 aa)) enclose the FAD-binding FR-type domain. The [2Fe-2S] cluster site is built by Cys-200, Cys-205, Cys-208, and Cys-216.

It belongs to the PyrK family. Heterotetramer of 2 PyrK and 2 PyrD type B subunits. [2Fe-2S] cluster serves as cofactor. The cofactor is FAD.

The protein operates within pyrimidine metabolism; UMP biosynthesis via de novo pathway; orotate from (S)-dihydroorotate (NAD(+) route): step 1/1. In terms of biological role, responsible for channeling the electrons from the oxidation of dihydroorotate from the FMN redox center in the PyrD type B subunit to the ultimate electron acceptor NAD(+). This chain is Probable dihydroorotate dehydrogenase B (NAD(+)), electron transfer subunit, found in Pyrococcus horikoshii (strain ATCC 700860 / DSM 12428 / JCM 9974 / NBRC 100139 / OT-3).